The chain runs to 489 residues: FAD-linked oxidoreductase tazG (489 aa).

The signal sequence occupies residues Met1–Ala17. Asn38 carries N-linked (GlcNAc...) asparagine glycosylation. An FAD-binding PCMH-type domain is found at Ala55–Val224. N-linked (GlcNAc...) asparagine glycosylation is found at Asn242 and Asn306.

The protein belongs to the oxygen-dependent FAD-linked oxidoreductase family. The cofactor is FAD.

Its pathway is secondary metabolite biosynthesis. In terms of biological role, FAD-linked oxidoreductase; part of the gene cluster that mediates the biosynthesis of azaterrilone A and other azaphilones, a class of fungal metabolites characterized by a highly oxygenated pyrano-quinone bicyclic core and exhibiting a broad range of bioactivities. The first step of the pathway begins with the non-reducing polyketide synthase tazA that assembles one acetyl-CoA starter unit, five malonyl-CoA units, and catalyzes a series of Claisen condensations, methylation, PT-mediated cyclization, and finally releases the first hexaketide precursor through the R-domain. The tazA product then undergoes reduction on its terminal ketone and the following pyran-ring formation by yet undetermined enzyme(s). Dehydration and enoyl reduction, possibly involving the trans-enoyl reductase tazE leads to the next intermediate. TazD is predicted as an acetyltransferase and might catalyze the acetylation steps leading to the synthesis of azaterrilone A. Azaterrilone A is not the final product of the taz pathway and both the highly reducing polyketide synthase tazB and the dual enzyme tazHJ catalyze late steps of the pathway, leading to the production of the 2 final stereoisomers that contain additional polyketide modification whose structures have still to be determined. This chain is FAD-linked oxidoreductase tazG, found in Aspergillus terreus (strain NIH 2624 / FGSC A1156).